Here is a 365-residue protein sequence, read N- to C-terminus: S-adenosylmethionine:tRNA ribosyltransferase-isomerase (365 aa).

Belongs to the QueA family. In terms of assembly, monomer.

It localises to the cytoplasm. The catalysed reaction is 7-aminomethyl-7-carbaguanosine(34) in tRNA + S-adenosyl-L-methionine = epoxyqueuosine(34) in tRNA + adenine + L-methionine + 2 H(+). It functions in the pathway tRNA modification; tRNA-queuosine biosynthesis. Its function is as follows. Transfers and isomerizes the ribose moiety from AdoMet to the 7-aminomethyl group of 7-deazaguanine (preQ1-tRNA) to give epoxyqueuosine (oQ-tRNA). This is S-adenosylmethionine:tRNA ribosyltransferase-isomerase from Helicobacter hepaticus (strain ATCC 51449 / 3B1).